A 911-amino-acid polypeptide reads, in one-letter code: Isoleucine--tRNA ligase (911 aa).

The 'HIGH' region signature appears at 57-67 (PYANGDIHMGH). Glutamate 551 lines the L-isoleucyl-5'-AMP pocket. The 'KMSKS' region signature appears at 592–596 (KMSKS). An ATP-binding site is contributed by lysine 595. Zn(2+) is bound by residues cysteine 881, cysteine 884, cysteine 901, and cysteine 904.

Belongs to the class-I aminoacyl-tRNA synthetase family. IleS type 1 subfamily. Monomer. Zn(2+) serves as cofactor.

It is found in the cytoplasm. It catalyses the reaction tRNA(Ile) + L-isoleucine + ATP = L-isoleucyl-tRNA(Ile) + AMP + diphosphate. Catalyzes the attachment of isoleucine to tRNA(Ile). As IleRS can inadvertently accommodate and process structurally similar amino acids such as valine, to avoid such errors it has two additional distinct tRNA(Ile)-dependent editing activities. One activity is designated as 'pretransfer' editing and involves the hydrolysis of activated Val-AMP. The other activity is designated 'posttransfer' editing and involves deacylation of mischarged Val-tRNA(Ile). The sequence is that of Isoleucine--tRNA ligase from Exiguobacterium sibiricum (strain DSM 17290 / CCUG 55495 / CIP 109462 / JCM 13490 / 255-15).